Here is a 410-residue protein sequence, read N- to C-terminus: Polyadenylation and cleavage factor homolog 5 (410 aa).

Residues 1-17 are compositionally biased toward polar residues; that stretch reads MASNGSFSAQRNANAGT. The interval 1–32 is disordered; the sequence is MASNGSFSAQRNANAGTTMKRRNDNRGYGGGI. Residues 191–214 are a coiled coil; sequence SKELTDLLSLLNNEKEKKTSEASN. The segment at 247 to 269 adopts a C2H2-type zinc-finger fold; the sequence is RQCTSCGVRFKCQEEHSKHMDWH.

In terms of assembly, forms a complex with cleavage and polyadenylation specificity factor (CPSF) subunits CSTF77, CLPS3, PCFS4 and PCFS1.

Its subcellular location is the nucleus. The protein is Polyadenylation and cleavage factor homolog 5 of Arabidopsis thaliana (Mouse-ear cress).